The following is a 457-amino-acid chain: 6-phosphofructo-2-kinase/fructose-2,6-bisphosphatase (457 aa).

The disordered stretch occupies residues 1 to 20; the sequence is MEIPPGLETTKRKVAHSDEH. The segment at 1–244 is 6-phosphofructo-2-kinase; the sequence is MEIPPGLETT…VYFLMNIHLL (244 aa). Positions 9 to 20 are enriched in basic and acidic residues; that stretch reads TTKRKVAHSDEH. 36-44 provides a ligand contact to ATP; sequence GLPARGKTY. Beta-D-fructose 6-phosphate is bound by residues Arg69 and Arg98. Residue Asp124 is part of the active site. Thr126 and Arg132 together coordinate beta-D-fructose 6-phosphate. Residue Cys154 is part of the active site. 163-168 contributes to the ATP binding site; sequence NVTDVK. Residues Lys168, Arg190, and Tyr194 each contribute to the beta-D-fructose 6-phosphate site. A fructose-2,6-bisphosphatase region spans residues 245–457; it reads PRSIYLTRHG…QLPLCDSPRD (213 aa). Arg252 contributes to the beta-D-fructose 2,6-bisphosphate binding site. The Tele-phosphohistidine intermediate role is filled by His253. Residues Asn259 and Gly265 each contribute to the beta-D-fructose 2,6-bisphosphate site. Glu324 functions as the Proton donor/acceptor in the catalytic mechanism. 6 residues coordinate beta-D-fructose 2,6-bisphosphate: Tyr335, Arg349, Lys353, Tyr364, Gln390, and Arg394. 346 to 349 is an ATP binding site; that stretch reads ADDR. ATP contacts are provided by residues 390–394 and Tyr426; that span reads QAVLR.

In the C-terminal section; belongs to the phosphoglycerate mutase family.

The enzyme catalyses beta-D-fructose 2,6-bisphosphate + H2O = beta-D-fructose 6-phosphate + phosphate. It carries out the reaction beta-D-fructose 6-phosphate + ATP = beta-D-fructose 2,6-bisphosphate + ADP + H(+). Functionally, synthesis and degradation of fructose 2,6-bisphosphate. The chain is 6-phosphofructo-2-kinase/fructose-2,6-bisphosphatase from Caenorhabditis elegans.